A 297-amino-acid chain; its full sequence is 4-hydroxy-tetrahydrodipicolinate synthase (297 aa).

Residue threonine 47 coordinates pyruvate. Tyrosine 136 serves as the catalytic Proton donor/acceptor. Catalysis depends on lysine 165, which acts as the Schiff-base intermediate with substrate. Threonine 206 lines the pyruvate pocket.

This sequence belongs to the DapA family. In terms of assembly, homotetramer; dimer of dimers.

Its subcellular location is the cytoplasm. The catalysed reaction is L-aspartate 4-semialdehyde + pyruvate = (2S,4S)-4-hydroxy-2,3,4,5-tetrahydrodipicolinate + H2O + H(+). It participates in amino-acid biosynthesis; L-lysine biosynthesis via DAP pathway; (S)-tetrahydrodipicolinate from L-aspartate: step 3/4. Its function is as follows. Catalyzes the condensation of (S)-aspartate-beta-semialdehyde [(S)-ASA] and pyruvate to 4-hydroxy-tetrahydrodipicolinate (HTPA). This chain is 4-hydroxy-tetrahydrodipicolinate synthase, found in Sulfurovum sp. (strain NBC37-1).